The primary structure comprises 187 residues: Orotate phosphoribosyltransferase (187 aa).

Residues arginine 98, lysine 99, lysine 102, histidine 104, and 128–136 (EDVTTTGGS) contribute to the 5-phospho-alpha-D-ribose 1-diphosphate site. Threonine 132 and arginine 160 together coordinate orotate.

The protein belongs to the purine/pyrimidine phosphoribosyltransferase family. PyrE subfamily. In terms of assembly, homodimer. The cofactor is Mg(2+).

The catalysed reaction is orotidine 5'-phosphate + diphosphate = orotate + 5-phospho-alpha-D-ribose 1-diphosphate. It functions in the pathway pyrimidine metabolism; UMP biosynthesis via de novo pathway; UMP from orotate: step 1/2. Functionally, catalyzes the transfer of a ribosyl phosphate group from 5-phosphoribose 1-diphosphate to orotate, leading to the formation of orotidine monophosphate (OMP). This Rhodopseudomonas palustris (strain BisB5) protein is Orotate phosphoribosyltransferase.